We begin with the raw amino-acid sequence, 376 residues long: uncharacterized protein (376 aa).

Belongs to the mimivirus L17x/L18x family.

This is an uncharacterized protein from Acanthamoeba polyphaga (Amoeba).